A 95-amino-acid polypeptide reads, in one-letter code: Costars family protein At4g33640 (95 aa).

Met1 carries the N-acetylmethionine modification.

It belongs to the costars family.

The sequence is that of Costars family protein At4g33640 from Arabidopsis thaliana (Mouse-ear cress).